The primary structure comprises 389 residues: BTB/POZ domain-containing protein KCTD9 (389 aa).

The region spanning 3 to 82 is the KHA domain; it reads RVTLFLNGSP…PQTDSKPPEG (80 aa). S11 is modified (phosphoserine). Residues 89 to 161 enclose the BTB domain; it reads DWLTLNVGGR…LRHGQLIVND (73 aa). 3 consecutive Pentapeptide repeat domains span residues 224 to 256, 258 to 297, and 338 to 376; these read NFSGADLSRLDLRYINFKMANLSRCNLAHANLC, ANLERADLSGSVLDCANLQGVKMLCSNAEGASLKLCNFED, and CNLRGATLAGTDLENCDLSGCDLQEANLRGSNVKGAIFE.

In terms of assembly, forms pentamers. Component of a complex composed of 5 subunits of KCTD9 and 5 CUL3.

It functions in the pathway protein modification; protein ubiquitination. Substrate-specific adapter of a BCR (BTB-CUL3-RBX1) E3 ubiquitin-protein ligase complex, which mediates the ubiquitination of target proteins, leading to their degradation by the proteasome. This chain is BTB/POZ domain-containing protein KCTD9 (KCTD9), found in Homo sapiens (Human).